Reading from the N-terminus, the 259-residue chain is AA9 family lytic polysaccharide monooxygenase E (259 aa).

Positions 1 to 20 (MKATVLAGLAAVIAAQGVAG) are cleaved as a signal peptide. Positions 21 and 99 each coordinate Cu(2+). Cys-69 and Cys-193 are disulfide-bonded. O2 contacts are provided by His-179 and Gln-188. Tyr-190 contacts Cu(2+).

The protein belongs to the polysaccharide monooxygenase AA9 family. Cu(2+) is required as a cofactor.

The protein localises to the secreted. The enzyme catalyses [(1-&gt;4)-beta-D-glucosyl]n+m + reduced acceptor + O2 = 4-dehydro-beta-D-glucosyl-[(1-&gt;4)-beta-D-glucosyl]n-1 + [(1-&gt;4)-beta-D-glucosyl]m + acceptor + H2O.. Its function is as follows. Lytic polysaccharide monooxygenase (LPMO) that depolymerizes crystalline and amorphous polysaccharides via the oxidation of scissile alpha- or beta-(1-4)-glycosidic bonds, yielding C1 or C4 oxidation products. Catalysis by LPMOs requires the reduction of the active-site copper from Cu(II) to Cu(I) by a reducing agent and H(2)O(2) or O(2) as a cosubstrate. The polypeptide is AA9 family lytic polysaccharide monooxygenase E (Malbranchea cinnamomea (Thermophilic fungus)).